Here is a 298-residue protein sequence, read N- to C-terminus: GTP cyclohydrolase FolE2 (298 aa).

The protein belongs to the GTP cyclohydrolase IV family.

The catalysed reaction is GTP + H2O = 7,8-dihydroneopterin 3'-triphosphate + formate + H(+). The protein operates within cofactor biosynthesis; 7,8-dihydroneopterin triphosphate biosynthesis; 7,8-dihydroneopterin triphosphate from GTP: step 1/1. In terms of biological role, converts GTP to 7,8-dihydroneopterin triphosphate. This Pseudomonas aeruginosa (strain LESB58) protein is GTP cyclohydrolase FolE2.